The primary structure comprises 525 residues: Lymphocyte activation gene 3 protein (525 aa).

Positions 1 to 22 (MWEAQFLGLLFLQPLWVAPVKP) are cleaved as a signal peptide. Topologically, residues 23–450 (LQPGAEVPVV…APGALPAGHL (428 aa)) are extracellular. The Ig-like V-type domain maps to 37-167 (GAPAQLPCSP…LSCRLRLRLG (131 aa)). The interaction with FGL1 stretch occupies residues 37–252 (GAPAQLPCSP…LTYRDGFNVS (216 aa)). Residues cysteine 44 and cysteine 160 are joined by a disulfide bond. The interval 62–97 (TWQHQPDSGPPAAAPGHPLAPGPHPAAPSSWGPRPR) is disordered. The segment covering 69–87 (SGPPAAAPGHPLAPGPHPA) has biased composition (pro residues). An Ig-like C2-type 1 domain is found at 168–252 (QASMTASPPG…LTYRDGFNVS (85 aa)). Asparagine 188 carries N-linked (GlcNAc...) asparagine glycosylation. The cysteines at positions 189 and 241 are disulfide-linked. Residues asparagine 250 and asparagine 256 are each glycosylated (N-linked (GlcNAc...) asparagine). 2 consecutive Ig-like C2-type domains span residues 265–343 (PTPL…QQLN) and 348–419 (LAII…QGER). Cysteine 282 and cysteine 333 form a disulfide bridge. Asparagine 343 carries N-linked (GlcNAc...) asparagine glycosylation. A disulfide bridge links cysteine 369 with cysteine 412. Positions 429 to 450 (ELSSPGAQRSGRAPGALPAGHL) are connecting peptide. The helical transmembrane segment at 451-471 (LLFLILGVLSLLLLVTGAFGF) threads the bilayer. Topologically, residues 472–525 (HLWRRQWRPRRFSALEQGIHPPQAQSKIEELEQEPEPEPEPEPEPEPEPEPEQL) are cytoplasmic. The interval 487–525 (EQGIHPPQAQSKIEELEQEPEPEPEPEPEPEPEPEPEQL) is disordered. The short motif at 498 to 503 (KIEELE) is the KIEELE motif element. The tract at residues 501–524 (ELEQEPEPEPEPEPEPEPEPEPEQ) is 12 X 2 AA tandem repeats of E-X. Residues 502 to 525 (LEQEPEPEPEPEPEPEPEPEPEQL) show a composition bias toward acidic residues.

It belongs to the LAG3 family. In terms of assembly, interacts with MHC class II (MHC-II); selectively recognizes stable complexes of peptide and MHC-II. Interacts with FGL1 (via the Fibrinogen C-terminal domain). Proteolytically cleaved by ADAM10 and ADAM17 within the connecting peptide region, leading to release of Secreted lymphocyte activation gene 3 protein (sLAG-3). ADAM10 mediates constitutive cleavage, but cleavage increases following T-cell activation, whereas shedding by ADAM17 is induced by TCR signaling in a PRKCQ-dependent manner. As to expression, primarily expressed in activated T-cells and a subset of natural killer (NK) cells.

Its subcellular location is the cell membrane. The protein resides in the secreted. Its function is as follows. Lymphocyte activation gene 3 protein: Inhibitory receptor on antigen activated T-cells. Delivers inhibitory signals upon binding to ligands, such as FGL1. FGL1 constitutes a major ligand of LAG3 and is responsible for LAG3 T-cell inhibitory function. Following TCR engagement, LAG3 associates with CD3-TCR in the immunological synapse and directly inhibits T-cell activation. May inhibit antigen-specific T-cell activation in synergy with PDCD1/PD-1, possibly by acting as a coreceptor for PDCD1/PD-1. Negatively regulates the proliferation, activation, effector function and homeostasis of both CD8(+) and CD4(+) T-cells. Also mediates immune tolerance: constitutively expressed on a subset of regulatory T-cells (Tregs) and contributes to their suppressive function. Also acts as a negative regulator of plasmacytoid dendritic cell (pDCs) activation. Binds MHC class II (MHC-II); the precise role of MHC-II-binding is however unclear. In terms of biological role, may function as a ligand for MHC class II (MHC-II) on antigen-presenting cells (APC), promoting APC activation/maturation and driving Th1 immune response. This Homo sapiens (Human) protein is Lymphocyte activation gene 3 protein.